The chain runs to 235 residues: Ribitol-5-phosphate cytidylyltransferase (235 aa).

CTP-binding positions include L7–G10, G82–S88, and S113.

It belongs to the IspD/TarI cytidylyltransferase family. TarI subfamily.

It catalyses the reaction D-ribitol 5-phosphate + CTP + H(+) = CDP-L-ribitol + diphosphate. It participates in cell wall biogenesis; poly(ribitol phosphate) teichoic acid biosynthesis. Functionally, catalyzes the transfer of the cytidylyl group of CTP to D-ribitol 5-phosphate. The sequence is that of Ribitol-5-phosphate cytidylyltransferase from Streptococcus pneumoniae (strain CGSP14).